A 601-amino-acid polypeptide reads, in one-letter code: NADH-ubiquinone oxidoreductase chain 5 (601 aa).

15 helical membrane-spanning segments follow: residues 3 to 23 (LIMP…MMSY), 36 to 56 (VTSS…MFLL), 84 to 104 (FFSI…MEFS), 114 to 134 (INQF…LVTA), 140 to 160 (LFIG…WWYG), 171 to 191 (AILY…WLLL), 201 to 221 (IFML…AAAG), 240 to 260 (TPVS…FLLV), 272 to 292 (ILTM…ICAL), 324 to 346 (AFLH…GSII), 365 to 385 (MPFT…MPFL), 404 to 426 (NAWA…TRLI), 456 to 476 (LALG…PLIT), 483 to 503 (LYMK…AMGL), and 581 to 601 (LIKL…MLII).

It belongs to the complex I subunit 5 family.

The protein resides in the mitochondrion inner membrane. It catalyses the reaction a ubiquinone + NADH + 5 H(+)(in) = a ubiquinol + NAD(+) + 4 H(+)(out). Its function is as follows. Core subunit of the mitochondrial membrane respiratory chain NADH dehydrogenase (Complex I) that is believed to belong to the minimal assembly required for catalysis. Complex I functions in the transfer of electrons from NADH to the respiratory chain. The immediate electron acceptor for the enzyme is believed to be ubiquinone. The sequence is that of NADH-ubiquinone oxidoreductase chain 5 (MT-ND5) from Dasypus novemcinctus (Nine-banded armadillo).